The chain runs to 99 residues: Large ribosomal subunit protein bL27 (99 aa).

The propeptide occupies 1 to 9 (MLIMNLQLF).

The protein belongs to the bacterial ribosomal protein bL27 family. In terms of processing, the N-terminus is cleaved by ribosomal processing cysteine protease Prp.

The polypeptide is Large ribosomal subunit protein bL27 (Clostridium botulinum (strain Alaska E43 / Type E3)).